Consider the following 261-residue polypeptide: Arcelin-5B (261 aa).

Residues methionine 1–serine 21 form the signal peptide. Residues asparagine 91 and asparagine 100 are each glycosylated (N-linked (GlcNAc...) asparagine). A disulfide bridge connects residues cysteine 167 and cysteine 203.

The protein belongs to the leguminous lectin family. Monomer.

Its function is as follows. Seed storage. This carbohydrate-binding lectin has toxic effects on bean bruchid pests. The protein is Arcelin-5B (ARC5B) of Phaseolus vulgaris (Kidney bean).